Consider the following 354-residue polypeptide: MRKLLIFSISAYLMAGIVSCKGVDSATPVTEDRLALNAVNAPADNTVNIKTFDKVKNAFGDGLSQSAEGTFTFPADVTTVKTIKMFIKNECPNKTCDEWDRYANVYVKNKTTGEWYEIGRFITPYWVGTEKLPRGLEIDVTDFKSLLSGNTELKIYTETWLAKGREYSVDFDIVYGTPDYKYSAVVPVIQYNKSSIDGVPYGKAHTLGLKKNIQLPTNTEKAYLRTTISGWGHAKPYDAGSRGCAEWCFRTHTIAINNANTFQHQLGALGCSANPINNQSPGNWAPDRAGWCPGMAVPTRIDVLNNSLTGSTFSYEYKFQSWTNNGTNGDAFYAISSFVIAKSNTPISAPVVTN.

The first 40 residues, 1-40 (MRKLLIFSISAYLMAGIVSCKGVDSATPVTEDRLALNAVN), serve as a signal peptide directing secretion. The cysteines at positions 91 and 96 are disulfide-linked. Residues Asp100, Glu158, and Glu246 contribute to the active site. 2 disulfides stabilise this stretch: Cys244-Cys248 and Cys271-Cys292.

In terms of assembly, monomer.

The catalysed reaction is Hydrolysis of an N(4)-(acetyl-beta-D-glucosaminyl)asparagine residue in which the glucosamine residue may be further glycosylated, to yield a (substituted) N-acetyl-beta-D-glucosaminylamine and a peptide containing an aspartate residue.. Cleaves an entire glycan from a glycoprotein. Requires that the glycosylated asparagine moiety (reaction 1) be substituted on its amino (R1) and carboxyl (R2) terminus with a polypeptide chain. In Elizabethkingia miricola (Chryseobacterium miricola), this protein is Peptide-N(4)-(N-acetyl-beta-D-glucosaminyl)asparagine amidase F (ngl).